The sequence spans 956 residues: Translation initiation factor IF-2 (956 aa).

The disordered stretch occupies residues 68-357 (APEAAAPKAP…GVSVPRGDGN (290 aa)). Composition is skewed to low complexity over residues 86 to 123 (AKPA…APAV), 141 to 156 (PGNN…PRAG), 164 to 175 (PAAAPASGAGRP), and 212 to 235 (GPRP…RPAA). Gly residues-rich tracts occupy residues 236-257 (GSGG…GGGN) and 276-324 (RGAG…GAGR). Over residues 325 to 334 (GKQRKSKRAK) the composition is skewed to basic residues. The 172-residue stretch at 449–620 (ARPPVVTVMG…AVMLTADAAL (172 aa)) folds into the tr-type G domain. Positions 458–465 (GHVDHGKT) are G1. 458–465 (GHVDHGKT) contributes to the GTP binding site. The G2 stretch occupies residues 483–487 (GITQH). The segment at 508–511 (DTPG) is G3. Residues 508–512 (DTPGH) and 562–565 (NKID) each bind GTP. Residues 562 to 565 (NKID) are G4. The tract at residues 598–600 (SAR) is G5.

Belongs to the TRAFAC class translation factor GTPase superfamily. Classic translation factor GTPase family. IF-2 subfamily.

It localises to the cytoplasm. One of the essential components for the initiation of protein synthesis. Protects formylmethionyl-tRNA from spontaneous hydrolysis and promotes its binding to the 30S ribosomal subunits. Also involved in the hydrolysis of GTP during the formation of the 70S ribosomal complex. This Renibacterium salmoninarum (strain ATCC 33209 / DSM 20767 / JCM 11484 / NBRC 15589 / NCIMB 2235) protein is Translation initiation factor IF-2.